We begin with the raw amino-acid sequence, 476 residues long: Zinc finger CCCH domain-containing protein 6 (476 aa).

Low complexity predominate over residues 1 to 10 (MEQPHAAAAA). Residues 1 to 57 (MEQPHAAAAAAGGGEGEGGASPDTGLEGPMWRMGLGGGGGGGGGGGGGDGDAAGRLP) form a disordered region. Over residues 34–51 (GLGGGGGGGGGGGGGDGD) the composition is skewed to gly residues. C3H1-type zinc fingers lie at residues 59 to 87 (RPGE…HPRD), 108 to 136 (RAGQ…HPKQ), and 153 to 181 (RLGE…HPEF). Positions 290 to 301 (SSTGQSSNNQQE) are enriched in polar residues. Positions 290-309 (SSTGQSSNNQQEHGFPERPG) are disordered. 2 consecutive C3H1-type zinc fingers follow at residues 307–335 (RPGQ…HPRE) and 353–381 (RPGA…HPMG). Residues 456 to 476 (TMMRAQTNTTSGGSSSPGGGR) are disordered.

It is found in the nucleus. The polypeptide is Zinc finger CCCH domain-containing protein 6 (Oryza sativa subsp. japonica (Rice)).